Here is a 1357-residue protein sequence, read N- to C-terminus: DNA-directed RNA polymerase subunit beta (1357 aa).

This sequence belongs to the RNA polymerase beta chain family. The RNAP catalytic core consists of 2 alpha, 1 beta, 1 beta' and 1 omega subunit. When a sigma factor is associated with the core the holoenzyme is formed, which can initiate transcription.

It carries out the reaction RNA(n) + a ribonucleoside 5'-triphosphate = RNA(n+1) + diphosphate. Functionally, DNA-dependent RNA polymerase catalyzes the transcription of DNA into RNA using the four ribonucleoside triphosphates as substrates. The sequence is that of DNA-directed RNA polymerase subunit beta from Acinetobacter baumannii (strain ATCC 17978 / DSM 105126 / CIP 53.77 / LMG 1025 / NCDC KC755 / 5377).